The following is a 435-amino-acid chain: Ribulose bisphosphate carboxylase large chain (435 aa).

2 residues coordinate substrate: N104 and T154. K156 serves as the catalytic Proton acceptor. Residue K158 participates in substrate binding. Mg(2+) is bound by residues K182, D184, and E185. K182 bears the N6-carboxylysine mark. H275 serves as the catalytic Proton acceptor. The substrate site is built by R276, H308, and S360.

This sequence belongs to the RuBisCO large chain family. Type I subfamily. Heterohexadecamer of 8 large chains and 8 small chains. Mg(2+) is required as a cofactor.

It is found in the plastid. The protein localises to the chloroplast. It carries out the reaction 2 (2R)-3-phosphoglycerate + 2 H(+) = D-ribulose 1,5-bisphosphate + CO2 + H2O. The enzyme catalyses D-ribulose 1,5-bisphosphate + O2 = 2-phosphoglycolate + (2R)-3-phosphoglycerate + 2 H(+). In terms of biological role, ruBisCO catalyzes two reactions: the carboxylation of D-ribulose 1,5-bisphosphate, the primary event in carbon dioxide fixation, as well as the oxidative fragmentation of the pentose substrate in the photorespiration process. Both reactions occur simultaneously and in competition at the same active site. The polypeptide is Ribulose bisphosphate carboxylase large chain (Euglena pisciformis).